The primary structure comprises 146 residues: Holo-[acyl-carrier-protein] synthase (146 aa).

Positions 9 and 63 each coordinate Mg(2+).

This sequence belongs to the P-Pant transferase superfamily. AcpS family. The cofactor is Mg(2+).

It is found in the cytoplasm. The catalysed reaction is apo-[ACP] + CoA = holo-[ACP] + adenosine 3',5'-bisphosphate + H(+). In terms of biological role, transfers the 4'-phosphopantetheine moiety from coenzyme A to a Ser of acyl-carrier-protein. The chain is Holo-[acyl-carrier-protein] synthase from Burkholderia orbicola (strain MC0-3).